The primary structure comprises 355 residues: Beta-ketoacyl-[acyl-carrier-protein] synthase III 1 (355 aa).

Residues C122 and H280 contribute to the active site. Positions 281–285 are ACP-binding; the sequence is QANER. The active site involves N311.

The protein belongs to the thiolase-like superfamily. FabH family. Homodimer.

It localises to the cytoplasm. The enzyme catalyses malonyl-[ACP] + acetyl-CoA + H(+) = 3-oxobutanoyl-[ACP] + CO2 + CoA. It functions in the pathway lipid metabolism; fatty acid biosynthesis. Its function is as follows. Catalyzes the condensation reaction of fatty acid synthesis by the addition to an acyl acceptor of two carbons from malonyl-ACP. Catalyzes the first condensation reaction which initiates fatty acid synthesis and may therefore play a role in governing the total rate of fatty acid production. Possesses both acetoacetyl-ACP synthase and acetyl transacylase activities. Its substrate specificity determines the biosynthesis of branched-chain and/or straight-chain of fatty acids. This is Beta-ketoacyl-[acyl-carrier-protein] synthase III 1 from Streptomyces avermitilis (strain ATCC 31267 / DSM 46492 / JCM 5070 / NBRC 14893 / NCIMB 12804 / NRRL 8165 / MA-4680).